A 244-amino-acid polypeptide reads, in one-letter code: Robin (244 aa).

The protein is Robin of Acanthamoeba polyphaga (Amoeba).